The following is a 732-amino-acid chain: Calcineurin-interacting protein 2 (732 aa).

6 disordered regions span residues 1–24, 115–169, 181–232, 310–351, 372–397, and 426–708; these read MNRG…REPY, DYEP…ALPK, QKKD…LDDR, ILSR…TSRR, RSQS…STVS, and QTVT…PLEE. The segment covering 8–17 has biased composition (polar residues); that stretch reads YNRSRSTSSR. Positions 117–129 are enriched in basic and acidic residues; that stretch reads EPLRKEPELKEQK. Polar residues-rich tracts occupy residues 151–163 and 189–208; these read SGIT…SSRT and IPRQ…NNEL. Low complexity predominate over residues 312 to 323; sequence SRSVSTSPSSVT. Over residues 324-351 the composition is skewed to polar residues; sequence DNIPKTSTSRIPSSENPKTMEHTTTSRR. Residues 426–439 show a composition bias toward polar residues; the sequence is QTVTNVRVPSSRGS. Basic and acidic residues-rich tracts occupy residues 526 to 538 and 546 to 557; these read QSPE…RFAD and PGDHQAREEDLP. The segment covering 607–619 has biased composition (polar residues); that stretch reads SVTPSEKSLPRNS. Over residues 688-705 the composition is skewed to low complexity; it reads NSPNKSSSSSKARPSAAP.

In terms of assembly, interacts with tax-6. As to expression, expressed in intestine.

The protein is Calcineurin-interacting protein 2 of Caenorhabditis elegans.